The sequence spans 199 residues: Recombination protein RecR (199 aa).

The C4-type zinc-finger motif lies at 58 to 73 (CLVCGNVTGSDICPIC). Residues 81–176 (GEICVVTDVA…AVTGLAQGVP (96 aa)) enclose the Toprim domain.

The protein belongs to the RecR family.

Functionally, may play a role in DNA repair. It seems to be involved in an RecBC-independent recombinational process of DNA repair. It may act with RecF and RecO. The sequence is that of Recombination protein RecR from Paracoccus denitrificans (strain Pd 1222).